Consider the following 265-residue polypeptide: MLENICINFKKVKEKTPLVHSITNYVTINDCANMLLAYGASPAMVESFDESYDFAKLASCIYINLGTLTREQEQSILMVCISAKNNNIPVVLDPVACGAVPHKIALIEKLFEIGRIDIIKGNIGEIKSLAGYNAKTRGVDSIDNGNDSIDACISLAKKYKCIVAATGVKDIVTDGKRTALIENGSKMLTLITGAGCMVGALTAATAGVEDDKFIATITSILSMNIAAEHTEKEVIGPGSFKVKLIDNIYLLKENHLRKEGKIKWI.

Residue Met-44 participates in substrate binding. ATP contacts are provided by Lys-120 and Thr-166. Gly-193 is a binding site for substrate.

Belongs to the Thz kinase family. Requires Mg(2+) as cofactor.

It catalyses the reaction 5-(2-hydroxyethyl)-4-methylthiazole + ATP = 4-methyl-5-(2-phosphooxyethyl)-thiazole + ADP + H(+). The protein operates within cofactor biosynthesis; thiamine diphosphate biosynthesis; 4-methyl-5-(2-phosphoethyl)-thiazole from 5-(2-hydroxyethyl)-4-methylthiazole: step 1/1. Catalyzes the phosphorylation of the hydroxyl group of 4-methyl-5-beta-hydroxyethylthiazole (THZ). In Clostridium novyi (strain NT), this protein is Hydroxyethylthiazole kinase.